We begin with the raw amino-acid sequence, 255 residues long: 5-oxoprolinase subunit A (255 aa).

Belongs to the LamB/PxpA family. In terms of assembly, forms a complex composed of PxpA, PxpB and PxpC.

It catalyses the reaction 5-oxo-L-proline + ATP + 2 H2O = L-glutamate + ADP + phosphate + H(+). In terms of biological role, catalyzes the cleavage of 5-oxoproline to form L-glutamate coupled to the hydrolysis of ATP to ADP and inorganic phosphate. The chain is 5-oxoprolinase subunit A from Pyrococcus horikoshii (strain ATCC 700860 / DSM 12428 / JCM 9974 / NBRC 100139 / OT-3).